Reading from the N-terminus, the 484-residue chain is Cobyric acid synthase (484 aa).

A GATase cobBQ-type domain is found at 251–438 (ALKVAVPVLS…LHGLFGSDAY (188 aa)). The active-site Nucleophile is Cys-333. The active site involves His-430.

The protein belongs to the CobB/CobQ family. CobQ subfamily.

The protein operates within cofactor biosynthesis; adenosylcobalamin biosynthesis. In terms of biological role, catalyzes amidations at positions B, D, E, and G on adenosylcobyrinic A,C-diamide. NH(2) groups are provided by glutamine, and one molecule of ATP is hydrogenolyzed for each amidation. This Sinorhizobium fredii (strain NBRC 101917 / NGR234) protein is Cobyric acid synthase.